The chain runs to 179 residues: MMARDPDWLLVGQVVAAHGLRGWLRVRCWSDFPERFTEPGPRWLQRDTDPEPLLHPLIEGQFFPAKGLYLVRLEGIPNRTVAETWVGARLLVPASHRLPLQPEEYHYRDLIGLAVYHQGELLGQVSGILAAGQDVLEITTSDHRQVLIPFVKALVPVVDLEKGALHVQPPPGLVESFLG.

The 72-residue stretch at proline 102 to leucine 173 folds into the PRC barrel domain.

The protein belongs to the RimM family. In terms of assembly, binds ribosomal protein uS19.

The protein localises to the cytoplasm. An accessory protein needed during the final step in the assembly of 30S ribosomal subunit, possibly for assembly of the head region. Essential for efficient processing of 16S rRNA. May be needed both before and after RbfA during the maturation of 16S rRNA. It has affinity for free ribosomal 30S subunits but not for 70S ribosomes. The sequence is that of Ribosome maturation factor RimM from Synechococcus sp. (strain JA-2-3B'a(2-13)) (Cyanobacteria bacterium Yellowstone B-Prime).